The sequence spans 94 residues: Phosphoribosyl-ATP pyrophosphatase (94 aa).

The protein belongs to the PRA-PH family.

Its subcellular location is the cytoplasm. The enzyme catalyses 1-(5-phospho-beta-D-ribosyl)-ATP + H2O = 1-(5-phospho-beta-D-ribosyl)-5'-AMP + diphosphate + H(+). It participates in amino-acid biosynthesis; L-histidine biosynthesis; L-histidine from 5-phospho-alpha-D-ribose 1-diphosphate: step 2/9. The chain is Phosphoribosyl-ATP pyrophosphatase from Saccharolobus islandicus (strain Y.N.15.51 / Yellowstone #2) (Sulfolobus islandicus).